The primary structure comprises 246 residues: Large ribosomal subunit protein uL3 (246 aa).

Disordered regions lie at residues 140-162 (SHRSIGSTGGRQDPGKTFKNKKM) and 214-246 (ADVPLPGKFRENGSAGASQIEAAPEAPASEENA). Q151 bears the N5-methylglutamine mark. The span at 234-246 (EAAPEAPASEENA) shows a compositional bias: low complexity.

It belongs to the universal ribosomal protein uL3 family. As to quaternary structure, part of the 50S ribosomal subunit. Forms a cluster with proteins L14 and L19. In terms of processing, methylated by PrmB.

Functionally, one of the primary rRNA binding proteins, it binds directly near the 3'-end of the 23S rRNA, where it nucleates assembly of the 50S subunit. This chain is Large ribosomal subunit protein uL3, found in Methylorubrum extorquens (strain CM4 / NCIMB 13688) (Methylobacterium extorquens).